A 201-amino-acid polypeptide reads, in one-letter code: Small ribosomal subunit protein uS4c (201 aa).

One can recognise an S4 RNA-binding domain in the interval 89–157 (MRLDNILFRL…VQNYIASSDP (69 aa)).

This sequence belongs to the universal ribosomal protein uS4 family. As to quaternary structure, part of the 30S ribosomal subunit. Contacts protein S5. The interaction surface between S4 and S5 is involved in control of translational fidelity.

It is found in the plastid. Its subcellular location is the chloroplast. In terms of biological role, one of the primary rRNA binding proteins, it binds directly to 16S rRNA where it nucleates assembly of the body of the 30S subunit. Its function is as follows. With S5 and S12 plays an important role in translational accuracy. The polypeptide is Small ribosomal subunit protein uS4c (rps4) (Triticum aestivum (Wheat)).